The following is a 282-amino-acid chain: MPVSRFAVFGHPIAHSLSPRIHTEFGRQMGVALNYLAFDVAPDAFRVSLERFVAEGGCGANVTLPLKEAAFEVCTTLSARARRAGAVNTLSRVDGVWHGENTDGTGLVRNLTERHGLDLRGRRALLLGAGGAARGVAPALLDAGITEMVIVNRSPERADMLCDALGEPGRVSARYWGDLGDLGNFELIVNATSIGNTSDMRTFSLPRSLLDSMTAAVDLNYGSAAVPFLAWAHAVETRYVIDGLGMLVEQAAESFSLWHGRRPDTDPVYTVLHSEYGAPGRS.

Shikimate contacts are provided by residues 16 to 18 (SLS) and threonine 63. Lysine 67 serves as the catalytic Proton acceptor. Shikimate is bound by residues asparagine 88 and aspartate 103. NADP(+) contacts are provided by residues 128–132 (GAGGA) and glycine 243.

Belongs to the shikimate dehydrogenase family. As to quaternary structure, homodimer.

The catalysed reaction is shikimate + NADP(+) = 3-dehydroshikimate + NADPH + H(+). It participates in metabolic intermediate biosynthesis; chorismate biosynthesis; chorismate from D-erythrose 4-phosphate and phosphoenolpyruvate: step 4/7. In terms of biological role, involved in the biosynthesis of the chorismate, which leads to the biosynthesis of aromatic amino acids. Catalyzes the reversible NADPH linked reduction of 3-dehydroshikimate (DHSA) to yield shikimate (SA). This is Shikimate dehydrogenase (NADP(+)) from Xylella fastidiosa (strain 9a5c).